We begin with the raw amino-acid sequence, 130 residues long: Iron-sulfur cluster insertion protein ErpA (130 aa).

The iron-sulfur cluster site is built by C46, C116, and C118.

Belongs to the HesB/IscA family. As to quaternary structure, homodimer. Requires iron-sulfur cluster as cofactor.

Its function is as follows. Required for insertion of 4Fe-4S clusters for at least IspG. The polypeptide is Iron-sulfur cluster insertion protein ErpA (Legionella pneumophila (strain Paris)).